A 146-amino-acid polypeptide reads, in one-letter code: Deoxyuridine 5'-triphosphate nucleotidohydrolase (146 aa).

Residues 66–68 (RSG), Asn-79, 83–85 (TVD), and Lys-93 contribute to the substrate site.

This sequence belongs to the dUTPase family. Mg(2+) is required as a cofactor.

It catalyses the reaction dUTP + H2O = dUMP + diphosphate + H(+). It participates in pyrimidine metabolism; dUMP biosynthesis; dUMP from dCTP (dUTP route): step 2/2. In terms of biological role, this enzyme is involved in nucleotide metabolism: it produces dUMP, the immediate precursor of thymidine nucleotides and it decreases the intracellular concentration of dUTP so that uracil cannot be incorporated into DNA. In Fusobacterium nucleatum subsp. nucleatum (strain ATCC 25586 / DSM 15643 / BCRC 10681 / CIP 101130 / JCM 8532 / KCTC 2640 / LMG 13131 / VPI 4355), this protein is Deoxyuridine 5'-triphosphate nucleotidohydrolase.